The following is a 78-amino-acid chain: Conotoxin Cal6.3a (78 aa).

The signal sequence occupies residues 1–21 (MRFLHFLIVAVLLASFMESGA). A propeptide spanning residues 22 to 26 (MPRNP) is cleaved from the precursor. 3 disulfides stabilise this stretch: C38–C49, C41–C53, and C48–C56. Q76 carries the post-translational modification Glutamine amide.

In terms of tissue distribution, expressed by the venom duct.

Its subcellular location is the secreted. In terms of biological role, probable neurotoxin with unknown target. Possibly targets ion channels. The sequence is that of Conotoxin Cal6.3a from Californiconus californicus (California cone).